A 475-amino-acid chain; its full sequence is tRNA-2-methylthio-N(6)-dimethylallyladenosine synthase (475 aa).

The segment covering 1-10 has biased composition (basic and acidic residues); sequence MQETTVKRDG. Residues 1-22 form a disordered region; that stretch reads MQETTVKRDGASPSDAGTPATT. The MTTase N-terminal domain maps to 27–144; sequence GKLYIRTFGC…LPDLIKRRRA (118 aa). Cys-36, Cys-73, Cys-107, Cys-181, Cys-185, and Cys-188 together coordinate [4Fe-4S] cluster. The Radical SAM core domain maps to 167-400; sequence RVDGATAFVS…QALINQQAAA (234 aa). The TRAM domain maps to 403–466; sequence QGMIGTRQRV…TNSLRGRVAG (64 aa).

Belongs to the methylthiotransferase family. MiaB subfamily. Monomer. The cofactor is [4Fe-4S] cluster.

It localises to the cytoplasm. The catalysed reaction is N(6)-dimethylallyladenosine(37) in tRNA + (sulfur carrier)-SH + AH2 + 2 S-adenosyl-L-methionine = 2-methylsulfanyl-N(6)-dimethylallyladenosine(37) in tRNA + (sulfur carrier)-H + 5'-deoxyadenosine + L-methionine + A + S-adenosyl-L-homocysteine + 2 H(+). In terms of biological role, catalyzes the methylthiolation of N6-(dimethylallyl)adenosine (i(6)A), leading to the formation of 2-methylthio-N6-(dimethylallyl)adenosine (ms(2)i(6)A) at position 37 in tRNAs that read codons beginning with uridine. The polypeptide is tRNA-2-methylthio-N(6)-dimethylallyladenosine synthase (Bordetella bronchiseptica (strain ATCC BAA-588 / NCTC 13252 / RB50) (Alcaligenes bronchisepticus)).